A 581-amino-acid chain; its full sequence is 4-hydroxy-3-methylbut-2-en-1-yl diphosphate synthase (flavodoxin) (581 aa).

[4Fe-4S] cluster-binding residues include C489, C492, C523, and E530.

It belongs to the IspG family. The cofactor is [4Fe-4S] cluster.

It catalyses the reaction (2E)-4-hydroxy-3-methylbut-2-enyl diphosphate + oxidized [flavodoxin] + H2O + 2 H(+) = 2-C-methyl-D-erythritol 2,4-cyclic diphosphate + reduced [flavodoxin]. It participates in isoprenoid biosynthesis; isopentenyl diphosphate biosynthesis via DXP pathway; isopentenyl diphosphate from 1-deoxy-D-xylulose 5-phosphate: step 5/6. Functionally, converts 2C-methyl-D-erythritol 2,4-cyclodiphosphate (ME-2,4cPP) into 1-hydroxy-2-methyl-2-(E)-butenyl 4-diphosphate. The chain is 4-hydroxy-3-methylbut-2-en-1-yl diphosphate synthase (flavodoxin) from Porphyromonas gingivalis (strain ATCC BAA-308 / W83).